We begin with the raw amino-acid sequence, 184 residues long: ATP synthase subunit delta (184 aa).

Belongs to the ATPase delta chain family. In terms of assembly, F-type ATPases have 2 components, F(1) - the catalytic core - and F(0) - the membrane proton channel. F(1) has five subunits: alpha(3), beta(3), gamma(1), delta(1), epsilon(1). F(0) has three main subunits: a(1), b(2) and c(10-14). The alpha and beta chains form an alternating ring which encloses part of the gamma chain. F(1) is attached to F(0) by a central stalk formed by the gamma and epsilon chains, while a peripheral stalk is formed by the delta and b chains.

It localises to the cell inner membrane. F(1)F(0) ATP synthase produces ATP from ADP in the presence of a proton or sodium gradient. F-type ATPases consist of two structural domains, F(1) containing the extramembraneous catalytic core and F(0) containing the membrane proton channel, linked together by a central stalk and a peripheral stalk. During catalysis, ATP synthesis in the catalytic domain of F(1) is coupled via a rotary mechanism of the central stalk subunits to proton translocation. Functionally, this protein is part of the stalk that links CF(0) to CF(1). It either transmits conformational changes from CF(0) to CF(1) or is implicated in proton conduction. The protein is ATP synthase subunit delta of Dichelobacter nodosus (strain VCS1703A).